A 298-amino-acid chain; its full sequence is Diphthine methyl ester synthase (298 aa).

S-adenosyl-L-methionine is bound by residues leucine 9, aspartate 85, glycine 88, 113 to 114, leucine 164, leucine 222, and histidine 247; that span reads SV.

This sequence belongs to the diphthine synthase family.

It is found in the cytoplasm. The catalysed reaction is 2-[(3S)-amino-3-carboxypropyl]-L-histidyl-[translation elongation factor 2] + 4 S-adenosyl-L-methionine = diphthine methyl ester-[translation elongation factor 2] + 4 S-adenosyl-L-homocysteine + 3 H(+). Its pathway is protein modification; peptidyl-diphthamide biosynthesis. Its function is as follows. S-adenosyl-L-methionine-dependent methyltransferase that catalyzes four methylations of the modified target histidine residue in translation elongation factor 2 (EF-2), to form an intermediate called diphthine methyl ester. The four successive methylation reactions represent the second step of diphthamide biosynthesis. This Eremothecium gossypii (strain ATCC 10895 / CBS 109.51 / FGSC 9923 / NRRL Y-1056) (Yeast) protein is Diphthine methyl ester synthase (DPH5).